The sequence spans 86 residues: Small ribosomal subunit protein bS20 (86 aa).

The protein belongs to the bacterial ribosomal protein bS20 family.

Functionally, binds directly to 16S ribosomal RNA. This is Small ribosomal subunit protein bS20 from Exiguobacterium sibiricum (strain DSM 17290 / CCUG 55495 / CIP 109462 / JCM 13490 / 255-15).